A 139-amino-acid polypeptide reads, in one-letter code: MRILGLDLGSKTLGVALSDEMGWTAQGIETIKIDEAGGDYGLNRLAELTKDYVIDKIVLGFPKNMNGTVGPRGEASQKFAEVLEETFQVPVVLWDERLSTMAAERMLISADVSRQKRKKVIDKMAAVMILQGYLDSLNS.

This sequence belongs to the YqgF nuclease family.

The protein resides in the cytoplasm. In terms of biological role, could be a nuclease involved in processing of the 5'-end of pre-16S rRNA. This chain is Putative pre-16S rRNA nuclease, found in Bacillus licheniformis (strain ATCC 14580 / DSM 13 / JCM 2505 / CCUG 7422 / NBRC 12200 / NCIMB 9375 / NCTC 10341 / NRRL NRS-1264 / Gibson 46).